The primary structure comprises 919 residues: Periodic tryptophan protein 2 homolog (919 aa).

WD repeat units follow at residues 12 to 50 (GTVY…SDTL), 53 to 93 (ATRY…LHHF), 94 to 132 (HFKG…REFN), 142 to 181 (GPYD…NLIY), and 186 to 225 (GHKD…EGLR). Positions 238–267 (QREEEEEEEEDQEGDRETTIRGKATPAEEE) are disordered. The segment covering 240-251 (EEEEEEEEDQEG) has biased composition (acidic residues). The segment covering 252–267 (DRETTIRGKATPAEEE) has biased composition (basic and acidic residues). WD repeat units follow at residues 286-325 (GDFN…LIHS), 328-368 (ISDQ…YVLK), 371-410 (GHFN…CFVT), 413-452 (EHSS…NFRT), 456-498 (PRPT…DVLS), 499-538 (GHEG…RTKE), 541-580 (ALTS…QTGS), 603-642 (AKGK…LMKR), and 700-740 (KPEI…DPFE). The segment at 882-919 (TKRSLDPLGSEEEAEASEDDSLHLLGGGGRDSEEEMLA) is disordered. Positions 890 to 900 (GSEEEAEASED) are enriched in acidic residues. 2 positions are modified to phosphoserine: Ser-898 and Ser-902.

It belongs to the WD repeat PWP2 family. As to quaternary structure, part of the small subunit (SSU) processome, composed of more than 70 proteins and the RNA chaperone small nucleolar RNA (snoRNA) U3.

The protein resides in the nucleus. The protein localises to the nucleolus. In terms of biological role, part of the small subunit (SSU) processome, first precursor of the small eukaryotic ribosomal subunit. During the assembly of the SSU processome in the nucleolus, many ribosome biogenesis factors, an RNA chaperone and ribosomal proteins associate with the nascent pre-rRNA and work in concert to generate RNA folding, modifications, rearrangements and cleavage as well as targeted degradation of pre-ribosomal RNA by the RNA exosome. The sequence is that of Periodic tryptophan protein 2 homolog from Homo sapiens (Human).